A 380-amino-acid chain; its full sequence is Queuine tRNA-ribosyltransferase (380 aa).

Asp-96 (proton acceptor) is an active-site residue. Substrate-binding positions include 96–100 (DSGGF), Asp-150, Gln-193, and Gly-220. Residues 251 to 257 (GVGAPDS) are RNA binding. Asp-270 (nucleophile) is an active-site residue. The segment at 275 to 279 (TRIAR) is RNA binding; important for wobble base 34 recognition. Zn(2+) contacts are provided by Cys-308, Cys-310, Cys-313, and His-339.

The protein belongs to the queuine tRNA-ribosyltransferase family. In terms of assembly, homodimer. Within each dimer, one monomer is responsible for RNA recognition and catalysis, while the other monomer binds to the replacement base PreQ1. It depends on Zn(2+) as a cofactor.

It catalyses the reaction 7-aminomethyl-7-carbaguanine + guanosine(34) in tRNA = 7-aminomethyl-7-carbaguanosine(34) in tRNA + guanine. It functions in the pathway tRNA modification; tRNA-queuosine biosynthesis. Its function is as follows. Catalyzes the base-exchange of a guanine (G) residue with the queuine precursor 7-aminomethyl-7-deazaguanine (PreQ1) at position 34 (anticodon wobble position) in tRNAs with GU(N) anticodons (tRNA-Asp, -Asn, -His and -Tyr). Catalysis occurs through a double-displacement mechanism. The nucleophile active site attacks the C1' of nucleotide 34 to detach the guanine base from the RNA, forming a covalent enzyme-RNA intermediate. The proton acceptor active site deprotonates the incoming PreQ1, allowing a nucleophilic attack on the C1' of the ribose to form the product. After dissociation, two additional enzymatic reactions on the tRNA convert PreQ1 to queuine (Q), resulting in the hypermodified nucleoside queuosine (7-(((4,5-cis-dihydroxy-2-cyclopenten-1-yl)amino)methyl)-7-deazaguanosine). The polypeptide is Queuine tRNA-ribosyltransferase (Streptococcus gordonii (strain Challis / ATCC 35105 / BCRC 15272 / CH1 / DL1 / V288)).